The primary structure comprises 541 residues: 1'-carboxy-chondrochloren decarboxylase (541 aa).

Residues 39 to 226 form the FAD-binding PCMH-type domain; that stretch reads TTHRIPAIIS…TRMTIWLAPR (188 aa).

The enzyme catalyses 1'-carboxy-chondrochloren A + FAD + 2 H(+) = chondrochloren A + FADH2 + CO2. It catalyses the reaction 1'-carboxy-chondrochloren B + FAD + 2 H(+) = chondrochloren B + FADH2 + CO2. It participates in antibiotic biosynthesis. Its activity is regulated as follows. Activity is not affected by the addition of EDTA or/and EGTA chelators or in the presence of external metals like Zn(2+), Mg(2+), Mn(2+) and Fe(2+). Activity is inhibited under low oxygen conditions. Functionally, oxidative decarboxylase involved in the biosynthesis of the antibiotics chondrochloren A and chondrochloren B. Catalyzes the decarboxylation of biologically inactive pre-chondrochloren A and pre-chondrochloren B to yield mature chondrochloren A and chondrochloren B, respectively. Cannot decarboxylate free L-tyrosine, 3-chloro-tyrosine or a number of chlorinated and non-chlorinated analog substrates containing variable N-acyl chains. In Chondromyces crocatus, this protein is 1'-carboxy-chondrochloren decarboxylase.